Here is a 287-residue protein sequence, read N- to C-terminus: Homoserine kinase (287 aa).

78-88 (PLSRGLGSSST) serves as a coordination point for ATP.

Belongs to the GHMP kinase family. Homoserine kinase subfamily.

It is found in the cytoplasm. The catalysed reaction is L-homoserine + ATP = O-phospho-L-homoserine + ADP + H(+). Its pathway is amino-acid biosynthesis; L-threonine biosynthesis; L-threonine from L-aspartate: step 4/5. Its function is as follows. Catalyzes the ATP-dependent phosphorylation of L-homoserine to L-homoserine phosphate. The chain is Homoserine kinase from Lactobacillus gasseri (strain ATCC 33323 / DSM 20243 / BCRC 14619 / CIP 102991 / JCM 1131 / KCTC 3163 / NCIMB 11718 / NCTC 13722 / AM63).